A 392-amino-acid chain; its full sequence is GDP-mannose transporter (392 aa).

The span at 1–11 (MDDKKNEDLEM) shows a compositional bias: basic and acidic residues. Residues 1–25 (MDDKKNEDLEMRNFNGRSSPSQRDP) form a disordered region. Residues 1 to 45 (MDDKKNEDLEMRNFNGRSSPSQRDPFLAKPGAAAKRGNSAFDLSN) are Cytoplasmic-facing. The helical transmembrane segment at 46–66 (VTNSPGISILAYCLASISMTV) threads the bilayer. Topologically, residues 67 to 76 (TNKYCVSGSN) are lumenal. A helical membrane pass occupies residues 77 to 97 (WNLNFFYLAIQSVVCIIAIII). The Cytoplasmic portion of the chain corresponds to 98–116 (CKQAGLITNLAPFDTKKAK). A helical membrane pass occupies residues 117-139 (TWFPISLLLVGMIYTSTKALQFL). The Lumenal segment spans residues 140 to 142 (SVP). A helical transmembrane segment spans residues 143–165 (VYTIFKNLTIIVIAYGEVLWFGG). At 166 to 171 (SVTPSA) the chain is on the cytoplasmic side. The chain crosses the membrane as a helical span at residues 172-191 (LFSFGLMVLSSVVAAWADIQ). The Lumenal portion of the chain corresponds to 192 to 210 (HALYGGGAAQSAEAAAALS). The chain crosses the membrane as a helical span at residues 211-231 (TLNAGYAWMGMNVFCTAAYVL). The Cytoplasmic portion of the chain corresponds to 232 to 246 (SMRKVIKKMNFKDWD). A helical membrane pass occupies residues 247–267 (TMFYNNLLTIPVLFVCSFIFE). N-linked (GlcNAc...) asparagine glycosylation is found at Asn-268 and Asn-273. Residues 268–285 (NWSSENLTKNFPLETRNN) are Lumenal-facing. Residues 286 to 306 (LILGMIYSGLATIFISYCSAW) traverse the membrane as a helical segment. Residues 307–314 (CIRVTSST) are Cytoplasmic-facing. The helical transmembrane segment at 315-337 (TYSMVGALNKLPIAVSGLVFFAA) threads the bilayer. At 338 to 340 (PVT) the chain is on the lumenal side. The chain crosses the membrane as a helical span at residues 341–360 (FGSVSAIFIGFVSGIVYAWA). The Cytoplasmic portion of the chain corresponds to 361–392 (KVRQNQSKGNILPTTQPVMSASSQSNRDAAKA). A disordered region spans residues 373-392 (PTTQPVMSASSQSNRDAAKA).

The protein belongs to the TPT transporter family. SLC35D subfamily. Homooligomer.

It is found in the golgi apparatus membrane. The protein resides in the cytoplasmic vesicle membrane. Its subcellular location is the endoplasmic reticulum membrane. Functionally, involved in the import of GDP-mannose from the cytoplasm into the Golgi lumen. The protein is GDP-mannose transporter (gmt1) of Botryotinia fuckeliana (strain B05.10) (Noble rot fungus).